Reading from the N-terminus, the 75-residue chain is Defensin-like protein 59 (75 aa).

The signal sequence occupies residues 1-19 (MNITKSYVVIFFLVMLTNS). 4 disulfides stabilise this stretch: Cys39–Cys73, Cys43–Cys66, Cys52–Cys71, and Cys56–Cys72.

This sequence belongs to the DEFL family.

Its subcellular location is the secreted. The protein is Defensin-like protein 59 of Arabidopsis thaliana (Mouse-ear cress).